The primary structure comprises 424 residues: Probable threonylcarbamoyladenosine tRNA methylthiotransferase (424 aa).

The MTTase N-terminal domain maps to 1–106; sequence MRVAIETYGC…VVDAVYSALN (106 aa). The [4Fe-4S] cluster site is built by Cys-10, Cys-44, Cys-73, Cys-143, Cys-147, and Cys-150. Residues 129–359 form the Radical SAM core domain; it reads LRENAIAIVS…TDLMRKIGLE (231 aa). A TRAM domain is found at 362–420; sequence KRFVGKKLRVLVTKEGKNGRNLARMNSYRAVVTEGAVGEFVEVKIKDCRFNYLIGQLAA.

The protein belongs to the methylthiotransferase family. CDKAL1 subfamily. [4Fe-4S] cluster serves as cofactor.

The enzyme catalyses N(6)-L-threonylcarbamoyladenosine(37) in tRNA + (sulfur carrier)-SH + AH2 + 2 S-adenosyl-L-methionine = 2-methylsulfanyl-N(6)-L-threonylcarbamoyladenosine(37) in tRNA + (sulfur carrier)-H + 5'-deoxyadenosine + L-methionine + A + S-adenosyl-L-homocysteine + 2 H(+). Catalyzes the methylthiolation of N6-threonylcarbamoyladenosine (t(6)A), leading to the formation of 2-methylthio-N6-threonylcarbamoyladenosine (ms(2)t(6)A) at position 37 in tRNAs that read codons beginning with adenine. The polypeptide is Probable threonylcarbamoyladenosine tRNA methylthiotransferase (Archaeoglobus fulgidus (strain ATCC 49558 / DSM 4304 / JCM 9628 / NBRC 100126 / VC-16)).